A 210-amino-acid chain; its full sequence is MWTFGRRAVAGLLASPSPAQAQTLARAPRLAELAQLCSRRGLRTGINATCTTHHTSSNLRGLNQIRNVKRQSVYLMNLRKSGTLGHPGSLDDTTYERLAEETLDSLAEFFEDLADKPYTFEDYDVSFGSGVLTVKLGGDLGTYVINKQTPNKQIWLSSPSSGPKRYDWTGKNWVYSHDGVSLHELLGAELTKALKTKLDLSSLAYSGKDA.

Residues 1–41 (MWTFGRRAVAGLLASPSPAQAQTLARAPRLAELAQLCSRRG) constitute a mitochondrion transit peptide.

The protein belongs to the frataxin family. In terms of assembly, component of the mitochondrial core iron-sulfur cluster (ISC) complex composed of NFS1, LYRM4, NDUFAB1, ISCU, FXN, and FDX2; this complex is a heterohexamer containing two copies of each monomer. Homodimer. Monomer (probable predominant form). Oligomer. Monomers and polymeric aggregates of &gt;1 MDa have been isolated from mitochondria. A small fraction of heterologous overexpressed recombinant frataxin forms high-molecular weight aggregates that incorporate iron. Interacts with LYRM4. Interacts (via ferrous form) with ISCU; the interaction is possible when both are bound to the dimeric form of the cysteine desulfurase complex (NFS1:LYRM4) and the interaction enhances FXN interaction to the dimeric form of the cysteine desulfurase complex (NFS1:LYRM4). Interacts with FECH; one iron-bound FXN monomer seems to interact with a FECH homodimer. Interacts with SDHA and SDHB. Interacts with ACO2; the interaction is dependent on citrate. Interacts with HSPA9. Interacts with ACO1. Interacts with ISCU (cytoplasmic form). Post-translationally, processed in two steps by mitochondrial processing peptidase (MPP). MPP first cleaves the precursor to intermediate form and subsequently converts the intermediate to yield frataxin mature form (frataxin(81-210)) which is the predominant form. The additional forms, frataxin(56-210) and frataxin(78-210), seem to be produced when the normal maturation process is impaired; their physiological relevance is unsure.

It localises to the mitochondrion. It is found in the cytoplasm. The protein resides in the cytosol. It carries out the reaction 4 Fe(2+) + O2 + 4 H(+) = 4 Fe(3+) + 2 H2O. Functionally, functions as an activator of persulfide transfer to the scaffoding protein ISCU as component of the core iron-sulfur cluster (ISC) assembly complex and participates to the [2Fe-2S] cluster assembly. Accelerates sulfur transfer from NFS1 persulfide intermediate to ISCU and to small thiols such as L-cysteine and glutathione leading to persulfuration of these thiols and ultimately sulfide release. Binds ferrous ion and is released from FXN upon the addition of both L-cysteine and reduced FDX2 during [2Fe-2S] cluster assembly. The core iron-sulfur cluster (ISC) assembly complex is involved in the de novo synthesis of a [2Fe-2S] cluster, the first step of the mitochondrial iron-sulfur protein biogenesis. This process is initiated by the cysteine desulfurase complex (NFS1:LYRM4:NDUFAB1) that produces persulfide which is delivered on the scaffold protein ISCU in a FXN-dependent manner. Then this complex is stabilized by FDX2 which provides reducing equivalents to accomplish the [2Fe-2S] cluster assembly. Finally, the [2Fe-2S] cluster is transferred from ISCU to chaperone proteins, including HSCB, HSPA9 and GLRX5. May play a role in the protection against iron-catalyzed oxidative stress through its ability to catalyze the oxidation of Fe(2+) to Fe(3+); the oligomeric form but not the monomeric form has in vitro ferroxidase activity. May be able to store large amounts of iron in the form of a ferrihydrite mineral by oligomerization; however, the physiological relevance is unsure as reports are conflicting and the function has only been shown using heterologous overexpression systems. May function as an iron chaperone protein that protects the aconitase [4Fe-4S]2+ cluster from disassembly and promotes enzyme reactivation. May play a role as a high affinity iron binding partner for FECH that is capable of both delivering iron to ferrochelatase and mediating the terminal step in mitochondrial heme biosynthesis. Its function is as follows. Modulates the RNA-binding activity of ACO1. May be involved in the cytoplasmic iron-sulfur protein biogenesis. May contribute to oxidative stress resistance and overall cell survival. The polypeptide is Frataxin, mitochondrial (Macaca fascicularis (Crab-eating macaque)).